The primary structure comprises 142 residues: Hemoglobin subunit alpha-A (142 aa).

A Globin domain is found at 2–142 (VLSAADKGNV…VATVLTAKYR (141 aa)). Histidine 59 serves as a coordination point for O2. Histidine 88 serves as a coordination point for heme b.

It belongs to the globin family. In terms of assembly, heterotetramer of two alpha chains and two beta chains. As to expression, red blood cells.

Functionally, involved in oxygen transport from the lung to the various peripheral tissues. In Anseranas semipalmata (Magpie goose), this protein is Hemoglobin subunit alpha-A (HBAA).